Here is a 596-residue protein sequence, read N- to C-terminus: Beta-fructofuranosidase, insoluble isoenzyme 7 (596 aa).

Residues 1–24 form the signal peptide; sequence MARLGLAVCAASFHLFLLLASTSS. Residues 51-54, glutamine 70, and tryptophan 78 contribute to the substrate site; that span reads WQND. Aspartate 54 is an active-site residue. An N-linked (GlcNAc...) asparagine glycan is attached at asparagine 82. Residues 115–116, 179–180, and glutamate 234 each bind substrate; these read WS and RD. Residue asparagine 330 is glycosylated (N-linked (GlcNAc...) asparagine). Cysteine 432 and cysteine 478 are oxidised to a cystine. An N-linked (GlcNAc...) asparagine glycan is attached at asparagine 552.

It belongs to the glycosyl hydrolase 32 family. Expressed in roots, leaves and flowers. Weakly expressed in seeds.

The protein localises to the secreted. Its subcellular location is the extracellular space. It localises to the apoplast. It is found in the cell wall. It catalyses the reaction Hydrolysis of terminal non-reducing beta-D-fructofuranoside residues in beta-D-fructofuranosides.. In terms of biological role, may play a role in sucrose partitioning during seed development. This chain is Beta-fructofuranosidase, insoluble isoenzyme 7 (CIN7), found in Oryza sativa subsp. japonica (Rice).